Reading from the N-terminus, the 125-residue chain is uncharacterized protein (125 aa).

This is an uncharacterized protein from Pasteurella multocida (strain Pm70).